Consider the following 225-residue polypeptide: PKHD-type hydroxylase YbiX (225 aa).

A Fe2OG dioxygenase domain is found at 78 to 177 (TLSTPLFNRY…RVASFMWIQS (100 aa)). Positions 96, 98, and 158 each coordinate Fe cation. Residue Arg-168 participates in 2-oxoglutarate binding.

Fe(2+) is required as a cofactor. Requires L-ascorbate as cofactor.

The chain is PKHD-type hydroxylase YbiX from Shigella boydii serotype 4 (strain Sb227).